We begin with the raw amino-acid sequence, 599 residues long: Endo-1,4-beta-xylanase B (599 aa).

The N-terminal stretch at 1–37 (MTISASDYRHPGNFLKRTTALLCVGTALTALAFNASA) is a signal peptide. In terms of domain architecture, CBM2 spans 38-136 (ACTYTIDSEW…TVTGAACNSA (99 aa)). Cysteine 39 and cysteine 133 are joined by a disulfide. The CBM6 domain occupies 163-289 (LLQEAQAGFC…LPNIDSLSVV (127 aa)). Positions 315–595 (SSSAASAKKF…RPAMTWLINN (281 aa)) constitute a GH10 domain. Glutamate 431 (proton donor) is an active-site residue. Glutamate 530 acts as the Nucleophile in catalysis.

The protein belongs to the glycosyl hydrolase 10 (cellulase F) family.

It carries out the reaction Endohydrolysis of (1-&gt;4)-beta-D-xylosidic linkages in xylans.. It functions in the pathway glycan metabolism; hemicellulose degradation. Functionally, xylanase B contributes to hydrolyze hemicellulose, the major component of plant cell-walls. The sequence is that of Endo-1,4-beta-xylanase B (xynB) from Cellvibrio japonicus (strain Ueda107) (Pseudomonas fluorescens subsp. cellulosa).